A 346-amino-acid chain; its full sequence is Phosphoribosylformylglycinamidine cyclo-ligase (346 aa).

This sequence belongs to the AIR synthase family.

The protein localises to the cytoplasm. It catalyses the reaction 2-formamido-N(1)-(5-O-phospho-beta-D-ribosyl)acetamidine + ATP = 5-amino-1-(5-phospho-beta-D-ribosyl)imidazole + ADP + phosphate + H(+). Its pathway is purine metabolism; IMP biosynthesis via de novo pathway; 5-amino-1-(5-phospho-D-ribosyl)imidazole from N(2)-formyl-N(1)-(5-phospho-D-ribosyl)glycinamide: step 2/2. The polypeptide is Phosphoribosylformylglycinamidine cyclo-ligase (Brevibacillus brevis (strain 47 / JCM 6285 / NBRC 100599)).